We begin with the raw amino-acid sequence, 326 residues long: GTPase Obg (326 aa).

The Obg domain maps to 1-159; sequence MKFVDSAKIY…LEIELELKLM (159 aa). Positions 119 to 138 are disordered; it reads EGGKGGKGNPHFASSTRQAP. Residues 160-323 form the OBG-type G domain; sequence ADVGLVGFPN…LKDELWSRVK (164 aa). Residues 166–173, 191–195, 213–216, 280–283, and 304–306 contribute to the GTP site; these read GFPNAGKS, FTTLV, DIPG, TKMD, and SSV. 2 residues coordinate Mg(2+): serine 173 and threonine 193.

The protein belongs to the TRAFAC class OBG-HflX-like GTPase superfamily. OBG GTPase family. In terms of assembly, monomer. Mg(2+) is required as a cofactor.

It localises to the cytoplasm. In terms of biological role, an essential GTPase which binds GTP, GDP and possibly (p)ppGpp with moderate affinity, with high nucleotide exchange rates and a fairly low GTP hydrolysis rate. Plays a role in control of the cell cycle, stress response, ribosome biogenesis and in those bacteria that undergo differentiation, in morphogenesis control. The polypeptide is GTPase Obg (Chlorobium phaeobacteroides (strain BS1)).